We begin with the raw amino-acid sequence, 1179 residues long: Pesticidal crystal protein Cry1Ad (1179 aa).

This sequence belongs to the delta endotoxin family.

Functionally, promotes colloidosmotic lysis by binding to the midgut epithelial cells of many lepidopteran larvae. The protein is Pesticidal crystal protein Cry1Ad (cry1Ad) of Bacillus thuringiensis subsp. aizawai.